The primary structure comprises 465 residues: MLSENEIKILSYLKLKKKANAEEISKELGLPLSSIFSLAKLLEEKGYVKIGERKIIRFELTEEGKKRLKEGFPEEILLKELNGQPSLIEDLKNKMGKDLEIAISWARKKNLVKIDQNRVIPNTSNYTFSTEKEALLKPESADEKVLQELLSRKLITRKEESKLEITLLKEEFEEQNYITQLTSELLRSKDWKKYKIREYNVEALPPYFPLAKKHFFRDFIEKLKDVMKELGFTEVNAGYIEMELYNFDLLFQAQDHPAREIHDSFRVDGLGKIDDERLLKEIKEMHEKGWKYSWDPQIAKRLVLRSQTTAVTARILSSRPSVPFKGFSLGKVFRPDSIDATHLIEFHQLDGVIIQKEFSFTDLLGILREIFYKIGIKEIKFKPGYFPFTEPSVEVYGKIEGLGWVEMSGAGLLRPEILKAMDIDANAGAWGIGIDRLAMLLFGLKDIRLLYANDIDFLRKMKVRL.

L-phenylalanine contacts are provided by residues threonine 309, 348 to 350 (QLD), and phenylalanine 388. Glutamate 390 is a Mg(2+) binding site.

This sequence belongs to the class-II aminoacyl-tRNA synthetase family. Phe-tRNA synthetase alpha subunit type 2 subfamily. Tetramer of two alpha and two beta subunits. Mg(2+) serves as cofactor.

It is found in the cytoplasm. The enzyme catalyses tRNA(Phe) + L-phenylalanine + ATP = L-phenylalanyl-tRNA(Phe) + AMP + diphosphate + H(+). The chain is Phenylalanine--tRNA ligase alpha subunit from Sulfolobus acidocaldarius (strain ATCC 33909 / DSM 639 / JCM 8929 / NBRC 15157 / NCIMB 11770).